Here is a 1484-residue protein sequence, read N- to C-terminus: DNA-directed RNA polymerase subunit beta' (1484 aa).

Cysteine 67, cysteine 69, cysteine 82, and cysteine 85 together coordinate Zn(2+). 3 residues coordinate Mg(2+): aspartate 499, aspartate 501, and aspartate 503. 4 residues coordinate Zn(2+): cysteine 867, cysteine 943, cysteine 950, and cysteine 953.

The protein belongs to the RNA polymerase beta' chain family. The RNAP catalytic core consists of 2 alpha, 1 beta, 1 beta' and 1 omega subunit. When a sigma factor is associated with the core the holoenzyme is formed, which can initiate transcription. It depends on Mg(2+) as a cofactor. Zn(2+) is required as a cofactor.

It carries out the reaction RNA(n) + a ribonucleoside 5'-triphosphate = RNA(n+1) + diphosphate. Functionally, DNA-dependent RNA polymerase catalyzes the transcription of DNA into RNA using the four ribonucleoside triphosphates as substrates. The sequence is that of DNA-directed RNA polymerase subunit beta' from Chlorobium phaeovibrioides (strain DSM 265 / 1930) (Prosthecochloris vibrioformis (strain DSM 265)).